Consider the following 353-residue polypeptide: S-adenosylmethionine:tRNA ribosyltransferase-isomerase (353 aa).

Belongs to the QueA family. In terms of assembly, monomer.

It localises to the cytoplasm. The catalysed reaction is 7-aminomethyl-7-carbaguanosine(34) in tRNA + S-adenosyl-L-methionine = epoxyqueuosine(34) in tRNA + adenine + L-methionine + 2 H(+). The protein operates within tRNA modification; tRNA-queuosine biosynthesis. Its function is as follows. Transfers and isomerizes the ribose moiety from AdoMet to the 7-aminomethyl group of 7-deazaguanine (preQ1-tRNA) to give epoxyqueuosine (oQ-tRNA). This chain is S-adenosylmethionine:tRNA ribosyltransferase-isomerase, found in Cupriavidus metallidurans (strain ATCC 43123 / DSM 2839 / NBRC 102507 / CH34) (Ralstonia metallidurans).